We begin with the raw amino-acid sequence, 353 residues long: MSKLETVYLYAGEEQPRVKLTCIKEGLTLTQVIKFVHSIQELYGIELQTSETITENLKIDCAPAYLKPNCIPHFYILEYEEISDTFFIWKSDGRWQLNKLSALLYVDNDANVVKNTSWKEVFQNDQRFKNYDKRAWLQNCLEKMNRDLSKLNVEQFWSQYDKICQSIAKQKKKQEQFNMEVFDNFKNIVSIAIIKTKVLSNKRLLTTTLKNYHNSMKKKYNIQEQNLKENSLASCSNNEPSASLESESRHFSPVNSLSPSSLSTDDEAVSTDYIYKGPESKPNVNFMHSSATNDLIKSNFESYFKLMAEDYETFDLRAWSRQRPRKFQLVEKKKITKNPPNSHHPHKNGKISF.

Polar residues predominate over residues 233–245 (ASCSNNEPSASLE). Residues 233–265 (ASCSNNEPSASLESESRHFSPVNSLSPSSLSTD) are disordered. The span at 252 to 263 (SPVNSLSPSSLS) shows a compositional bias: low complexity.

This is an uncharacterized protein from Saccharomyces cerevisiae (strain ATCC 204508 / S288c) (Baker's yeast).